We begin with the raw amino-acid sequence, 208 residues long: Adult-specific cuticular protein ACP-20 (208 aa).

The N-terminal stretch at 1–17 (MLVQITALAFLAGIASA) is a signal peptide. Repeat unit 1 spans residues 34–43 (GLGGGLGGVG). A 2 X 10 AA repeats region spans residues 34 to 180 (GLGGGLGGVG…GLGGGLGGVG (147 aa)). The Chitin-binding type R&amp;R domain maps to 64-135 (PAHYQFKYGV…VGHAVHPQVL (72 aa)). Repeat unit 2 spans residues 171–180 (GLGGGLGGVG).

In terms of tissue distribution, epidermal regions synthesizing hard cuticle.

In terms of biological role, cuticular proteins play a significant role in determining the physical properties of cuticles. This is Adult-specific cuticular protein ACP-20 (ACP20) from Tenebrio molitor (Yellow mealworm beetle).